Reading from the N-terminus, the 655-residue chain is Potassium voltage-gated channel subfamily A member 4 (655 aa).

Residues 1–306 (MEVAMVSAES…LLFEYPESSS (306 aa)) are Cytoplasmic-facing. A disordered region spans residues 24–153 (QARARERERL…SEEDHGDGCS (130 aa)). Positions 36–50 (SRAAAAAAVAAATAA) are enriched in low complexity. Over residues 81-90 (GSREEEATRT) the composition is skewed to basic and acidic residues. Positions 91–100 (EKKKKLHHRQ) are enriched in basic residues. S123 bears the Phosphoserine mark. The span at 123–138 (SEEEEDEEEEEEEEEE) shows a compositional bias: acidic residues. Basic and acidic residues predominate over residues 139-150 (GRFYYSEEDHGD). Residues 307–328 (PARGIAIVSVLVILISIVIFCL) traverse the membrane as a helical segment. The Extracellular portion of the chain corresponds to 329-372 (ETLPEFRDDRDLIMALSAGGHSRLLNDTSAPHLENSGHTIFNDP). N354 is a glycosylation site (N-linked (GlcNAc...) asparagine). Residues 373–394 (FFIVETVCIVWFSFEFVVRCFA) traverse the membrane as a helical segment. The Cytoplasmic segment spans residues 395–405 (CPSQALFFKNI). The helical transmembrane segment at 406–426 (MNIIDIVSILPYFITLGTDLA) threads the bilayer. The Extracellular segment spans residues 427–441 (QQQGGGNGQQQQAMS). The chain crosses the membrane as a helical; Voltage-sensor span at residues 442–462 (FAILRIIRLVRVFRIFKLSRH). The Cytoplasmic segment spans residues 463 to 477 (SKGLQILGHTLRASM). The interval 464–477 (KGLQILGHTLRASM) is S4-S5 linker. Residues 478–499 (RELGLLIFFLFIGVILFSSAVY) form a helical membrane-spanning segment. Topologically, residues 500–513 (FAEADEPTTHFQSI) are extracellular. Positions 514–525 (PDAFWWAVVTMT) form an intramembrane region, helical. The short motif at 526–531 (TVGYGD) is the Selectivity filter element. An intramembrane segment occupies 526-533 (TVGYGDMK). Over 534–540 (PITVGGK) the chain is Extracellular. Residues 541 to 569 (IVGSLCAIAGVLTIALPVPVIVSNFNYFY) traverse the membrane as a helical segment. The Cytoplasmic segment spans residues 570–655 (HRETENEEQT…SNAKAVETDV (86 aa)). Phosphoserine; by PKA is present on S601. Residues 631–642 (CQGKGDDSETDK) are compositionally biased toward basic and acidic residues. A disordered region spans residues 631-655 (CQGKGDDSETDKNNCSNAKAVETDV). The short motif at 653 to 655 (TDV) is the PDZ-binding element.

The protein belongs to the potassium channel family. A (Shaker) (TC 1.A.1.2) subfamily. Kv1.4/KCNA4 sub-subfamily. As to quaternary structure, homotetramer and heterotetramer of potassium channel proteins. Interacts with KCNAB1 and KCNAB2. Interacts with DLG1, DLG2 and DLG4 via their PDZ domains. Interacts with SIGMAR1. Part of a complex containing KCNA1, KCNAB1 and LGI1. Detected in a complex with KCNA1. Interacts with KCNA2. Interacts (via cytoplasmic N-terminal domain) with KCNRG. In terms of processing, N-glycosylated. In terms of tissue distribution, detected in brain (at protein level). Heart and brain.

It localises to the cell membrane. Its subcellular location is the cell projection. The protein localises to the axon. It carries out the reaction K(+)(in) = K(+)(out). Its function is as follows. Voltage-gated potassium channel that mediates transmembrane potassium transport in excitable membranes. Forms tetrameric potassium-selective channels through which potassium ions pass in accordance with their electrochemical gradient. The channel alternates between opened and closed conformations in response to the voltage difference across the membrane. Can form functional homotetrameric channels and heterotetrameric channels that contain variable proportions of KCNA1, KCNA2, KCNA4, KCNA5, and possibly other family members as well; channel properties depend on the type of alpha subunits that are part of the channel. Channel properties are modulated by cytoplasmic beta subunits that regulate the subcellular location of the alpha subunits and promote rapid inactivation. In vivo, membranes probably contain a mixture of heteromeric potassium channel complexes, making it difficult to assign currents observed in intact tissues to any particular potassium channel family member. Homotetrameric KCNA4 forms a potassium channel that opens in response to membrane depolarization, followed by rapid spontaneous channel closure. Likewise, a heterotetrameric channel formed by KCNA1 and KCNA4 shows rapid inactivation. This chain is Potassium voltage-gated channel subfamily A member 4 (Kcna4), found in Rattus norvegicus (Rat).